Reading from the N-terminus, the 219-residue chain is Rho-related protein racN (219 aa).

12-19 contributes to the GTP binding site; it reads GDVTIGKT. The Effector region motif lies at 33-41; the sequence is YIPTIFDNH. GTP is bound by residues 58–62 and 114–117; these read DTGGG and TKTD. Cys216 is subject to Cysteine methyl ester. The S-geranylgeranyl cysteine moiety is linked to residue Cys216. Residues 217-219 constitute a propeptide, removed in mature form; sequence IIC.

This sequence belongs to the small GTPase superfamily. Rho family.

The protein localises to the cell membrane. This Dictyostelium discoideum (Social amoeba) protein is Rho-related protein racN (racN).